The sequence spans 181 residues: UPF0302 protein LMHCC_0635 (181 aa).

The protein belongs to the UPF0302 family.

This chain is UPF0302 protein LMHCC_0635, found in Listeria monocytogenes serotype 4a (strain HCC23).